We begin with the raw amino-acid sequence, 256 residues long: Extracellular serine-rich protein ARB_03024 (256 aa).

The N-terminal stretch at 1 to 19 (MVATKSVLSAVALAGVAAA) is a signal peptide. The interval 135 to 235 (KIVPQSGSPT…TPTASPGAAA (101 aa)) is disordered. The span at 149 to 159 (GTLGGSGGSGG) shows a compositional bias: gly residues. 2 stretches are compositionally biased toward low complexity: residues 160–204 (SSSS…QSTP) and 215–235 (PSAT…GAAA). Residue alanine 233 is the site of GPI-anchor amidated alanine attachment. Positions 234 to 256 (AAGLKGSAVLAGVVALGAWIGLL) are cleaved as a propeptide — removed in mature form.

The protein resides in the cell membrane. It localises to the secreted. This chain is Extracellular serine-rich protein ARB_03024, found in Arthroderma benhamiae (strain ATCC MYA-4681 / CBS 112371) (Trichophyton mentagrophytes).